Reading from the N-terminus, the 373-residue chain is 4-hydroxy-3-methylbut-2-en-1-yl diphosphate synthase (flavodoxin) (373 aa).

Residues cysteine 270, cysteine 273, cysteine 305, and glutamate 312 each contribute to the [4Fe-4S] cluster site.

The protein belongs to the IspG family. [4Fe-4S] cluster serves as cofactor.

The catalysed reaction is (2E)-4-hydroxy-3-methylbut-2-enyl diphosphate + oxidized [flavodoxin] + H2O + 2 H(+) = 2-C-methyl-D-erythritol 2,4-cyclic diphosphate + reduced [flavodoxin]. Its pathway is isoprenoid biosynthesis; isopentenyl diphosphate biosynthesis via DXP pathway; isopentenyl diphosphate from 1-deoxy-D-xylulose 5-phosphate: step 5/6. Functionally, converts 2C-methyl-D-erythritol 2,4-cyclodiphosphate (ME-2,4cPP) into 1-hydroxy-2-methyl-2-(E)-butenyl 4-diphosphate. The protein is 4-hydroxy-3-methylbut-2-en-1-yl diphosphate synthase (flavodoxin) of Vibrio atlanticus (strain LGP32) (Vibrio splendidus (strain Mel32)).